Here is a 133-residue protein sequence, read N- to C-terminus: Large ribosomal subunit protein bL17 (133 aa).

The protein belongs to the bacterial ribosomal protein bL17 family. As to quaternary structure, part of the 50S ribosomal subunit. Contacts protein L32.

This is Large ribosomal subunit protein bL17 from Idiomarina loihiensis (strain ATCC BAA-735 / DSM 15497 / L2-TR).